The primary structure comprises 385 residues: Glycerol-3-phosphate dehydrogenase [NAD(+)] 1 (385 aa).

NAD(+) is bound by residues 29–34, phenylalanine 121, lysine 144, and alanine 177; that span reads GSGNWG. Lysine 144 serves as a coordination point for substrate. Lysine 232 serves as the catalytic Proton acceptor. NAD(+)-binding residues include arginine 296 and glutamine 325. 296–297 contributes to the substrate binding site; it reads RN. Phosphoserine is present on serine 376. At threonine 382 the chain carries Phosphothreonine.

It belongs to the NAD-dependent glycerol-3-phosphate dehydrogenase family.

The protein localises to the cytoplasm. The enzyme catalyses sn-glycerol 3-phosphate + NAD(+) = dihydroxyacetone phosphate + NADH + H(+). This Schizosaccharomyces pombe (strain 972 / ATCC 24843) (Fission yeast) protein is Glycerol-3-phosphate dehydrogenase [NAD(+)] 1 (gpd1).